Here is a 175-residue protein sequence, read N- to C-terminus: Apoptosis regulator Bcl-2 homolog (175 aa).

Residues 75–94 (QVLEDKINWGRIITIIAFCA) carry the BH1 motif. The BH2 motif lies at 105–120 (SPQYYDGIISEAITDA).

It belongs to the Bcl-2 family. In terms of assembly, interacts with host BAX; this interaction inhibits BAX oligomerization and subsequent activation. Interacts with host BAK1.

It localises to the host mitochondrion. Its function is as follows. Plays a role in the inhibition of host apoptosis by sequestering and inactivating multiple proapoptotic BCL-2 proteins, including BAK1 and BAX. The polypeptide is Apoptosis regulator Bcl-2 homolog (Vertebrata (FPV)).